Consider the following 571-residue polypeptide: Proline--tRNA ligase (571 aa).

It belongs to the class-II aminoacyl-tRNA synthetase family. ProS type 1 subfamily. As to quaternary structure, homodimer.

Its subcellular location is the cytoplasm. The catalysed reaction is tRNA(Pro) + L-proline + ATP = L-prolyl-tRNA(Pro) + AMP + diphosphate. Catalyzes the attachment of proline to tRNA(Pro) in a two-step reaction: proline is first activated by ATP to form Pro-AMP and then transferred to the acceptor end of tRNA(Pro). As ProRS can inadvertently accommodate and process non-cognate amino acids such as alanine and cysteine, to avoid such errors it has two additional distinct editing activities against alanine. One activity is designated as 'pretransfer' editing and involves the tRNA(Pro)-independent hydrolysis of activated Ala-AMP. The other activity is designated 'posttransfer' editing and involves deacylation of mischarged Ala-tRNA(Pro). The misacylated Cys-tRNA(Pro) is not edited by ProRS. This is Proline--tRNA ligase from Acinetobacter baumannii (strain ATCC 17978 / DSM 105126 / CIP 53.77 / LMG 1025 / NCDC KC755 / 5377).